The chain runs to 110 residues: Large ribosomal subunit protein uL22 (110 aa).

The protein belongs to the universal ribosomal protein uL22 family. Part of the 50S ribosomal subunit.

Its function is as follows. This protein binds specifically to 23S rRNA; its binding is stimulated by other ribosomal proteins, e.g. L4, L17, and L20. It is important during the early stages of 50S assembly. It makes multiple contacts with different domains of the 23S rRNA in the assembled 50S subunit and ribosome. In terms of biological role, the globular domain of the protein is located near the polypeptide exit tunnel on the outside of the subunit, while an extended beta-hairpin is found that lines the wall of the exit tunnel in the center of the 70S ribosome. This is Large ribosomal subunit protein uL22 from Leptospira interrogans serogroup Icterohaemorrhagiae serovar copenhageni (strain Fiocruz L1-130).